The sequence spans 445 residues: MKTPKNDVYTVSRLNGEVRQLLEGQLGRIWLNAEISNFAAPGSGHWYLTLKDNFSQIRCAMFKGRNQAVTFRPANGQQVLVKGNISVYEPRGDYQLLIESMLPAGDGLLAQQYEALKMKLAAEGLFASDTKRSLPANIQRIGVVTSPTGAAIRDILHVLARRDASIEVIIYPTPVQGTDAAKSICDAINLANSRREVDVLLVTRGGGSLEDLWSFNDEGLAHTLYNSGIPVVSAVGHEVDMTISDYVADLRAPTPSAGAELLSKDADNKAQKLLSQLSRLKQSWQHYQLKKQNQLQACEHRLQKQDPQRRLQMYEQSFDEMQLRLQQAMQTKLHAYTLKQQNLSSRLASQSPQHRLDLEAQRLSYLSAKLNGAMIDKLKMSEQRLAHRAQQLDTVSPLATLSRGYSITLTGEGKVVQSPSDTCVGDTLTTRLRDGSVTSTVVEVG.

The protein belongs to the XseA family. As to quaternary structure, heterooligomer composed of large and small subunits.

It localises to the cytoplasm. It carries out the reaction Exonucleolytic cleavage in either 5'- to 3'- or 3'- to 5'-direction to yield nucleoside 5'-phosphates.. Bidirectionally degrades single-stranded DNA into large acid-insoluble oligonucleotides, which are then degraded further into small acid-soluble oligonucleotides. This is Exodeoxyribonuclease 7 large subunit from Shewanella halifaxensis (strain HAW-EB4).